We begin with the raw amino-acid sequence, 339 residues long: Probable geranylgeranyl transferase type-2 subunit beta (339 aa).

6 PFTB repeats span residues isoleucine 24–lysine 65, lysine 72–aspartate 113, isoleucine 120–lysine 161, cysteine 168–asparagine 209, isoleucine 216–aspartate 257, and asparagine 264–glycine 306. Geranylgeranyl diphosphate contacts are provided by residues histidine 194 to glycine 196 and arginine 236 to tryptophan 248. Zn(2+)-binding residues include aspartate 242, cysteine 244, and histidine 294.

The protein belongs to the protein prenyltransferase subunit beta family. Heterodimer of an alpha and a beta subunit. The cofactor is Zn(2+).

The enzyme catalyses geranylgeranyl diphosphate + L-cysteinyl-[protein] = S-geranylgeranyl-L-cysteinyl-[protein] + diphosphate. Its function is as follows. Catalyzes the transfer of a geranyl-geranyl moiety from geranyl-geranyl pyrophosphate to both cysteines in Rab proteins with an -XXCC, -XCXC and -CCXX C-terminal. This Dictyostelium discoideum (Social amoeba) protein is Probable geranylgeranyl transferase type-2 subunit beta (rabggtb).